A 128-amino-acid polypeptide reads, in one-letter code: Glycophorin-C (128 aa).

Residues 1-12 (MWSTRSPNSTAW) show a composition bias toward polar residues. A disordered region spans residues 1–48 (MWSTRSPNSTAWPLSLEPDPGMASASTTMHTTTIAEPDPGMSGWPDGR). Residues 1 to 57 (MWSTRSPNSTAWPLSLEPDPGMASASTTMHTTTIAEPDPGMSGWPDGRMETSTPTIM) are Extracellular-facing. O-linked (GalNAc...) serine glycosylation occurs at Ser-3. O-linked (GalNAc...) threonine glycosylation is present at Thr-4. Ser-6 carries O-linked (GalNAc...) serine glycosylation. A glycan (N-linked (GlcNAc...) asparagine) is linked at Asn-8. Ser-9 carries an O-linked (GalNAc...) serine glycan. Thr-10 carries an O-linked (GalNAc...) threonine glycan. O-linked (GalNAc...) serine glycans are attached at residues Ser-15, Ser-24, and Ser-26. A compositionally biased stretch (low complexity) spans 22 to 33 (MASASTTMHTTT). O-linked (GalNAc...) threonine glycans are attached at residues Thr-27, Thr-28, Thr-31, Thr-32, and Thr-33. Ser-42 carries an O-linked (GalNAc...) serine glycan. The chain crosses the membrane as a helical; Signal-anchor for type III membrane protein span at residues 58 to 81 (DIVVIAGVIAAVAIVLVSLLFVML). Over 82 to 128 (RYMYRHKGTYHTNEAKGTEFAESADAALQGDPALQDAGDSSRKEYFI) the chain is Cytoplasmic. Ser-104 and Ser-122 each carry phosphoserine. Residues 108-128 (ALQGDPALQDAGDSSRKEYFI) are disordered.

It belongs to the glycophorin-C family. O-glycosylated with core 1 or possibly core 8 glycans. Glycophorin-C is expressed in erythrocytes. Glycophorin-D and IsoGPC are ubiquitously expressed.

It is found in the cell membrane. Its function is as follows. This protein is a minor sialoglycoprotein in human erythrocyte membranes. The blood group Gerbich antigens and receptors for Plasmodium falciparum merozoites are most likely located within the extracellular domain. Glycophorin-C plays an important role in regulating the stability of red cells. This chain is Glycophorin-C (GYPC), found in Homo sapiens (Human).